Here is a 211-residue protein sequence, read N- to C-terminus: Uridine kinase (211 aa).

ATP is bound at residue G12–T19.

It belongs to the uridine kinase family.

It is found in the cytoplasm. It catalyses the reaction uridine + ATP = UMP + ADP + H(+). It carries out the reaction cytidine + ATP = CMP + ADP + H(+). It functions in the pathway pyrimidine metabolism; CTP biosynthesis via salvage pathway; CTP from cytidine: step 1/3. It participates in pyrimidine metabolism; UMP biosynthesis via salvage pathway; UMP from uridine: step 1/1. The polypeptide is Uridine kinase (Geobacillus kaustophilus (strain HTA426)).